A 331-amino-acid chain; its full sequence is Biotin synthase (331 aa).

The Radical SAM core domain occupies 52–277 (PEVEVEGIVS…RTILRYAGGR (226 aa)). 3 residues coordinate [4Fe-4S] cluster: C67, C71, and C74. [2Fe-2S] cluster is bound by residues C110, C202, and R272.

It belongs to the radical SAM superfamily. Biotin synthase family. As to quaternary structure, homodimer. Requires [4Fe-4S] cluster as cofactor. [2Fe-2S] cluster is required as a cofactor.

The catalysed reaction is (4R,5S)-dethiobiotin + (sulfur carrier)-SH + 2 reduced [2Fe-2S]-[ferredoxin] + 2 S-adenosyl-L-methionine = (sulfur carrier)-H + biotin + 2 5'-deoxyadenosine + 2 L-methionine + 2 oxidized [2Fe-2S]-[ferredoxin]. The protein operates within cofactor biosynthesis; biotin biosynthesis; biotin from 7,8-diaminononanoate: step 2/2. Catalyzes the conversion of dethiobiotin (DTB) to biotin by the insertion of a sulfur atom into dethiobiotin via a radical-based mechanism. In Salinispora arenicola (strain CNS-205), this protein is Biotin synthase.